Here is a 140-residue protein sequence, read N- to C-terminus: Acyl-coenzyme A thioesterase 13 (140 aa).

Position 1 is an N-acetylmethionine (Met-1). An N6-acetyllysine mark is found at Lys-27, Lys-37, and Lys-43. Residue Glu-46 participates in CoA binding. 2 residues coordinate substrate: Asn-50 and Gly-81. Residues Ser-83, 90–95, and 108–113 each bind CoA; these read YMSPAK and KQGKTL. Lys-108 and Lys-127 each carry N6-acetyllysine. CoA is bound at residue His-137.

This sequence belongs to the thioesterase PaaI family. As to quaternary structure, homotetramer. Interacts with PCTP. In terms of tissue distribution, highly expressed in the kidney and moderately in the heart, liver, brain, small and large intestine. Also expressed in brown adipose tissue.

It localises to the cytoplasm. It is found in the cytosol. The protein localises to the mitochondrion. Its subcellular location is the nucleus. The protein resides in the cytoskeleton. It localises to the spindle. It carries out the reaction a fatty acyl-CoA + H2O = a fatty acid + CoA + H(+). The enzyme catalyses decanoyl-CoA + H2O = decanoate + CoA + H(+). It catalyses the reaction octanoyl-CoA + H2O = octanoate + CoA + H(+). The catalysed reaction is butanoyl-CoA + H2O = butanoate + CoA + H(+). It carries out the reaction hexanoyl-CoA + H2O = hexanoate + CoA + H(+). The enzyme catalyses tetradecanoyl-CoA + H2O = tetradecanoate + CoA + H(+). It catalyses the reaction hexadecanoyl-CoA + H2O = hexadecanoate + CoA + H(+). The catalysed reaction is dodecanoyl-CoA + H2O = dodecanoate + CoA + H(+). It carries out the reaction (9Z)-octadecenoyl-CoA + H2O = (9Z)-octadecenoate + CoA + H(+). Its function is as follows. Catalyzes the hydrolysis of acyl-CoAs into free fatty acids and coenzyme A (CoASH), regulating their respective intracellular levels. Has acyl-CoA thioesterase activity towards medium (C12) and long-chain (C18) fatty acyl-CoA substrates. Can also hydrolyze 3-hydroxyphenylacetyl-CoA and 3,4-dihydroxyphenylacetyl-CoA (in vitro). May play a role in controlling adaptive thermogenesis. This is Acyl-coenzyme A thioesterase 13 from Mus musculus (Mouse).